Here is a 32-residue protein sequence, read N- to C-terminus: Corticostatin-related peptide RK-1 (32 aa).

3 disulfides stabilise this stretch: C3/C29, C5/C19, and C9/C28.

The protein localises to the secreted. Its function is as follows. Has antimicrobial activity against E.coli and activates ion channel activity. The chain is Corticostatin-related peptide RK-1 from Oryctolagus cuniculus (Rabbit).